A 183-amino-acid polypeptide reads, in one-letter code: Bifunctional protein PyrR (183 aa).

The short motif at 102 to 114 (VVLVDDVLYTGRT) is the PRPP-binding element.

It belongs to the purine/pyrimidine phosphoribosyltransferase family. PyrR subfamily. In terms of assembly, homodimer and homohexamer; in equilibrium.

The enzyme catalyses UMP + diphosphate = 5-phospho-alpha-D-ribose 1-diphosphate + uracil. Functionally, regulates transcriptional attenuation of the pyrimidine nucleotide (pyr) operon by binding in a uridine-dependent manner to specific sites on pyr mRNA. This disrupts an antiterminator hairpin in the RNA and favors formation of a downstream transcription terminator, leading to a reduced expression of downstream genes. Also displays a weak uracil phosphoribosyltransferase activity which is not physiologically significant. This Listeria welshimeri serovar 6b (strain ATCC 35897 / DSM 20650 / CCUG 15529 / CIP 8149 / NCTC 11857 / SLCC 5334 / V8) protein is Bifunctional protein PyrR.